Reading from the N-terminus, the 643-residue chain is MEPVPLQDFVRALDPASLPRVLRVCSGVYFEGSIYEISGNECCLSTGDLIKVTQVRLQKVVCENPKTSQTMELAPNFQGYFTPLNTPQSYETLEELVSATTQSSKQLPTCFMSTHRIVTEGRVVTEDQLLMLEAVVMHLGIRSARCVLGMEGQQVILHLPLSQKGPFWTWEPSAPRTLLQVLQDPALKDLVLTCPTLPWHSLILRPQYEIQAIMHMRRTIVKIPSTLEVDVEDVTASSRHVHFIKPLLLSEVLAWEGPFPLSMEILEVPEGRPIFLSPWVGSLQKGQRLCVYGLASPPWRVLASSKGRKVPRHFLVSGGYQGKLRRRPREFPTAYDLLGAFQPGRPLRVVATKDCEGEREENPEFTSLAVGDRLEVLGPGQAHGAQGSDVDVLVCQRLSDQAGEDEEEECKEEAESPERVLLPFHFPGSFVEEMSDSRRYSLADLTAQFSLPCEVKVVAKDTSHPTDPLTSFLGLRLEEKITEPFLVVSLDSEPGMCFEIPPRWLDLTVVKAKGQPDLPEGSLPIATVEELTDTFYYRLRKLPACEIQAPPPRPPKNQGLSKQRRHSSEGGVKSSQVLGLQQHARLPKPKAKTLPEFIKDGSSTYSKIPAHRKGHRPAKPQRQDLDDDEHDYEEILEQFQKTI.

2 CABIT regions span residues 1-238 (MEPV…TASS) and 239-514 (RHVH…KAKG). Residues 546–631 (EIQAPPPRPP…RQDLDDDEHD (86 aa)) are disordered. Thr593 is subject to Phosphothreonine. Positions 609 to 619 (PAHRKGHRPAK) are enriched in basic residues. Tyr632 bears the Phosphotyrosine mark.

It belongs to the themis family. Interacts with VAV1. Interacts with LAT. Interacts constitutively with GRB2, LYN and PLCG2; these interactions increase the activation of PLCG2 and its downstream pathways following B cell receptor stimulation. Phosphorylation at Tyr-632 is induced by LPS. Phosphorylated by Src kinases (Lck or Fyn) following BCR engagement. In terms of tissue distribution, expressed in different endometrial adenocarcinoma cell lines and various other cell lines apart from the prostate cell line LNCaP and the ovarian cancer cell line BG1.

Its subcellular location is the nucleus. It localises to the cytoplasm. Its function is as follows. May constitute a control point in macrophage inflammatory response, promoting LPS-induced TLR4-mediated TNF production. Determines the threshold for activation of B cells by low-affinity and low-avidity ligands via PLCG2 activation and its downstream pathways. The protein is Protein THEMIS2 of Homo sapiens (Human).